A 65-amino-acid polypeptide reads, in one-letter code: Large ribosomal subunit protein uL29 (65 aa).

Belongs to the universal ribosomal protein uL29 family.

The polypeptide is Large ribosomal subunit protein uL29 (rpmC) (Buchnera aphidicola subsp. Acyrthosiphon pisum (strain APS) (Acyrthosiphon pisum symbiotic bacterium)).